Reading from the N-terminus, the 1035-residue chain is Cell-division control histidine kinase PdhS (1035 aa).

An important for polar localization region spans residues 1–613 (MSGSYPFIDI…HADGSEEPVD (613 aa)). The segment at 500 to 533 (QGLANTRAESETPVSETSSIEPVEPTPPVKTRSE) is disordered. Residues 614-1035 (AHLNAIAWRG…VFPPTRVLAD (422 aa)) form an interaction with DivK region. A PAS domain is found at 659-730 (HVEELKTILD…YLHGLSGNGV (72 aa)). Residues 802-1031 (RISHEIRTPL…VVEIVFPPTR (230 aa)) form the Histidine kinase domain. Phosphohistidine; by autocatalysis is present on His-805.

Interacts with DivK.

The protein localises to the cytoplasm. The catalysed reaction is ATP + protein L-histidine = ADP + protein N-phospho-L-histidine.. Its function is as follows. Functions as a polar differentiation marker. Essential protein that, by localizing in the old pole of dividing cells, controls cell division and maturation, probably through control of DivK phosphorylation status and cellular distribution, which in turn regulates CtrA, a transcriptional regulator of the minB operon. The asymmetrical localization of this protein is probably required for cells to enter a new division cycle. In Brucella melitensis biotype 1 (strain ATCC 23456 / CCUG 17765 / NCTC 10094 / 16M), this protein is Cell-division control histidine kinase PdhS (pdhS).